We begin with the raw amino-acid sequence, 152 residues long: Endoribonuclease YbeY (152 aa).

His-117, His-121, and His-127 together coordinate Zn(2+).

It belongs to the endoribonuclease YbeY family. Zn(2+) serves as cofactor.

Its subcellular location is the cytoplasm. In terms of biological role, single strand-specific metallo-endoribonuclease involved in late-stage 70S ribosome quality control and in maturation of the 3' terminus of the 16S rRNA. The protein is Endoribonuclease YbeY of Borreliella afzelii (strain PKo) (Borrelia afzelii).